The primary structure comprises 233 residues: Beta-fibrinogenase brevinase (233 aa).

The 224-residue stretch at 1–224 (VIGGDECNIN…YIDWIQSIIA (224 aa)) folds into the Peptidase S1 domain. Cystine bridges form between Cys-7–Cys-138, Cys-25–Cys-41, Cys-73–Cys-231, Cys-117–Cys-185, Cys-149–Cys-164, and Cys-175–Cys-200. Residue His-40 is the Charge relay system of the active site. A glycan (N-linked (GlcNAc...) asparagine) is linked at Asn-54. The active-site Charge relay system is the Asp-85. A glycan (N-linked (GlcNAc...) asparagine) is linked at Asn-129. The Cell attachment site motif lies at 176-178 (RGD). The active-site Charge relay system is the Ser-179. Residue Asn-226 is glycosylated (N-linked (GlcNAc...) asparagine).

It belongs to the peptidase S1 family. Snake venom subfamily. Heterodimer of the brevinase A chain and the brevinase B chain. As to expression, expressed by the venom gland.

Its subcellular location is the secreted. Its activity is regulated as follows. The fibrinolytic activity is completely inhibited by PMSF, diisopropylfluorophosphate (DFP), pefabloc, dithiothreitol (DTT) and Zn(2+), but not by Pepstatin A, E64, iodoacetate, chymostatin, tosyl-Lphenylalanine chloromethyl ketone (TPCK), soybean trypsin inhibitor (SBTI), phosphoramidon, Ca(2+), Co(2+), Cu(2+), Fe(2+), Mg(2+), Mn(2+), K(+), and Na(+). In terms of biological role, snake venom serine protease that has fibrinogenolytic activities. Preferentially cleaves the Bbeta-chain (FGB) and more slowly the Aa-chain (FGA) of fibrinogen, but does not affect the gamma-chain. Also has fibrinolytic activity. May play a role in antithrombotic reaction as well as thrombolytic reaction. The polypeptide is Beta-fibrinogenase brevinase (Gloydius blomhoffii (Mamushi)).